Here is a 328-residue protein sequence, read N- to C-terminus: MKRHLISAADLTRDDAVLILDTAEEMARVADRPIKKLPTLRGRTVVNLFFEDSTRTRISFEAAAKRLSADVINFSAKGSSVSKGESLKDTALTLEAMGADAVVIRHGASGAPYRLATSGWIDGAVVNAGDGTHEHPTQALLDAFTMRRRLVGADTGLGRDLDGRRITIVGDILHSRVARSNVHLLTTLGAHVTLVAPPTLVPVGVEKWPCDVSYSLDDVLAKSDAVMMLRVQRERMNAAYFPTEREYSRRYGLDGERMAKMPEHAIVMHPGPMVRGMEITAEVADSDRCTVVEQVANGVSIRMAVLYLLLGGSDTALSAAPARTEENK.

Positions 55 and 56 each coordinate carbamoyl phosphate. Lys-83 is a binding site for L-aspartate. Residues Arg-105, His-135, and Gln-138 each coordinate carbamoyl phosphate. Arg-176 and Arg-230 together coordinate L-aspartate. Residues Gly-271 and Pro-272 each coordinate carbamoyl phosphate.

It belongs to the aspartate/ornithine carbamoyltransferase superfamily. ATCase family. As to quaternary structure, heterododecamer (2C3:3R2) of six catalytic PyrB chains organized as two trimers (C3), and six regulatory PyrI chains organized as three dimers (R2).

It catalyses the reaction carbamoyl phosphate + L-aspartate = N-carbamoyl-L-aspartate + phosphate + H(+). It functions in the pathway pyrimidine metabolism; UMP biosynthesis via de novo pathway; (S)-dihydroorotate from bicarbonate: step 2/3. Catalyzes the condensation of carbamoyl phosphate and aspartate to form carbamoyl aspartate and inorganic phosphate, the committed step in the de novo pyrimidine nucleotide biosynthesis pathway. This Streptomyces griseus subsp. griseus (strain JCM 4626 / CBS 651.72 / NBRC 13350 / KCC S-0626 / ISP 5235) protein is Aspartate carbamoyltransferase catalytic subunit.